We begin with the raw amino-acid sequence, 135 residues long: Small ribosomal subunit protein uS11 (135 aa).

A compositionally biased stretch (polar residues) spans 1–10; it reads MPPKTRSQTG. A disordered region spans residues 1–28; that stretch reads MPPKTRSQTGAKKVRRKEKKNVAHGHAH. The span at 12–28 shows a compositional bias: basic residues; the sequence is KKVRRKEKKNVAHGHAH.

This sequence belongs to the universal ribosomal protein uS11 family. As to quaternary structure, part of the 30S ribosomal subunit. Interacts with proteins S7 and S18. Binds to IF-3.

Its function is as follows. Located on the platform of the 30S subunit, it bridges several disparate RNA helices of the 16S rRNA. Forms part of the Shine-Dalgarno cleft in the 70S ribosome. This chain is Small ribosomal subunit protein uS11, found in Acidothermus cellulolyticus (strain ATCC 43068 / DSM 8971 / 11B).